A 190-amino-acid polypeptide reads, in one-letter code: Nucleoside triphosphate pyrophosphatase (190 aa).

Asp-69 functions as the Proton acceptor in the catalytic mechanism.

This sequence belongs to the Maf family. A divalent metal cation serves as cofactor.

Its subcellular location is the cytoplasm. It catalyses the reaction a ribonucleoside 5'-triphosphate + H2O = a ribonucleoside 5'-phosphate + diphosphate + H(+). It carries out the reaction a 2'-deoxyribonucleoside 5'-triphosphate + H2O = a 2'-deoxyribonucleoside 5'-phosphate + diphosphate + H(+). Its function is as follows. Nucleoside triphosphate pyrophosphatase. May have a dual role in cell division arrest and in preventing the incorporation of modified nucleotides into cellular nucleic acids. The sequence is that of Nucleoside triphosphate pyrophosphatase from Helicobacter pylori (strain J99 / ATCC 700824) (Campylobacter pylori J99).